The chain runs to 74 residues: UPF0235 protein tsr1994 (74 aa).

Belongs to the UPF0235 family.

This Thermosynechococcus vestitus (strain NIES-2133 / IAM M-273 / BP-1) protein is UPF0235 protein tsr1994.